Here is a 499-residue protein sequence, read N- to C-terminus: Circadian clock oscillator protein KaiC (499 aa).

KaiC domains follow at residues 1 to 243 (MQSS…VSVF) and 257 to 499 (VRIS…DERA). Positions 45, 46, 47, 48, 49, 85, 220, 221, 222, 224, 226, 286, 287, 288, 289, 290, 291, and 292 each coordinate ATP. T49 provides a ligand contact to Mg(2+). T291 lines the Mg(2+) pocket. E314 contacts Mg(2+). W327 is a binding site for ATP. S427 is modified (phosphoserine; by autocatalysis). T428 carries the post-translational modification Phosphothreonine; by autocatalysis. ATP-binding residues include R447, K453, M454, R455, S457, H459, and K461.

The protein belongs to the KaiC family. As to quaternary structure, homohexamer; hexamerization is dependent on ATP-binding. Component of the KaiBC complex. KaiC interacts with SasA, activating its autokinase function and leading to RpaA activation. Mg(2+) is required as a cofactor. Phosphorylated on serine and threonine residues by autocatalysis. Has a 4 step phosphorylation cycle; the autokinase acts first on Thr-428, then Ser-427. When Ser-427 is modified KaiC switches to an autophosphatase mode, acting first on phospho-Thr-428 then phospho-Ser-427.

It carries out the reaction L-seryl-[protein] + ATP = O-phospho-L-seryl-[protein] + ADP + H(+). The enzyme catalyses L-threonyl-[protein] + ATP = O-phospho-L-threonyl-[protein] + ADP + H(+). The catalysed reaction is ATP + H2O = ADP + phosphate + H(+). Central component of the KaiBC oscillator complex, which constitutes the main circadian regulator in cyanobacteria. Its composition changes during the circadian cycle to control KaiC phosphorylation. Autophosphorylates and has a weak ATPase activity; ATPase activity defines the circadian period. In Prochlorococcus marinus (strain MIT 9313), this protein is Circadian clock oscillator protein KaiC.